We begin with the raw amino-acid sequence, 62 residues long: Large ribosomal subunit protein uL29 (62 aa).

Belongs to the universal ribosomal protein uL29 family.

The polypeptide is Large ribosomal subunit protein uL29 (Syntrophotalea carbinolica (strain DSM 2380 / NBRC 103641 / GraBd1) (Pelobacter carbinolicus)).